The following is a 353-amino-acid chain: D-glycerol 3-phosphate phosphatase (353 aa).

The Nucleophile role is filled by Asp-14. Asp-14, Asp-16, and Asp-209 together coordinate Mg(2+). Asp-16 functions as the Proton donor in the catalytic mechanism.

It belongs to the HAD-like hydrolase superfamily. As to quaternary structure, homodimer. Mg(2+) serves as cofactor. It depends on Co(2+) as a cofactor. Mn(2+) is required as a cofactor.

It carries out the reaction sn-glycerol 1-phosphate + H2O = glycerol + phosphate. The protein operates within glycerolipid metabolism. Dephosphorylates D-glycerol 3-phosphate (sn-glycerol 1-phosphate). Is the final enzyme involved in the recycling/catabolism of glycerophospholipid polar heads. To a lesser extent, is also able to act on glycerol 2-phosphate and D-ribulose 5-phosphate, but cannot use D-glyceraldehyde 3-phosphate, dihydroxyacetone-phosphate, UMP or GMP as substrates. In Mycobacterium tuberculosis (strain ATCC 25618 / H37Rv), this protein is D-glycerol 3-phosphate phosphatase.